Here is a 367-residue protein sequence, read N- to C-terminus: tRNA(Ile)-lysidine synthase, chloroplastic (367 aa).

An ATP-binding site is contributed by 64–69 (SGGQDS).

This sequence belongs to the tRNA(Ile)-lysidine synthase family.

Its subcellular location is the plastid. The protein resides in the chloroplast. The catalysed reaction is cytidine(34) in tRNA(Ile2) + L-lysine + ATP = lysidine(34) in tRNA(Ile2) + AMP + diphosphate + H(+). In terms of biological role, ligates lysine onto the cytidine present at position 34 of the AUA codon-specific tRNA(Ile) that contains the anticodon CAU, in an ATP-dependent manner. Cytidine is converted to lysidine, thus changing the amino acid specificity of the tRNA from methionine to isoleucine. The polypeptide is tRNA(Ile)-lysidine synthase, chloroplastic (Nephroselmis olivacea (Green alga)).